Consider the following 394-residue polypeptide: Protein arginine N-methyltransferase 8 (394 aa).

G2 is lipidated: N-myristoyl glycine. The segment at M16–A40 is disordered. Short sequence motifs (SH3-binding) lie at residues P29–P42 and P53–R58. Positions P30–P39 are enriched in pro residues. At R58 the chain carries Omega-N-methylarginine; by autocatalysis. R73 bears the Asymmetric dimethylarginine; by autocatalysis mark. The 322-residue stretch at R73 to R394 folds into the SAM-dependent MTase PRMT-type domain. S-adenosyl-L-methionine-binding positions include H86, R95, G119, G119 to T122, E141, and E170. Active-site residues include E185 and E194.

It belongs to the class I-like SAM-binding methyltransferase superfamily. Protein arginine N-methyltransferase family. PRMT8 subfamily. In terms of assembly, homodimer. Tetramer; individual homodimers associates to form a homotetramer. Homooctamer; individual homodimers associates to form a homooctamer and homooligomerization is required for proper localization to the cell membrane. Heterodimer with PRMT1; heterodimerization may recruit PRMT1 activity to the plasma membrane. Interacts with PRMT2 (via the SH3 domain). Interacts with FYN (via the SH3 domain). Interacts with EWS; independently of EWS methylation status. Brain-specific.

The protein resides in the cell membrane. The catalysed reaction is L-arginyl-[protein] + S-adenosyl-L-methionine = N(omega)-methyl-L-arginyl-[protein] + S-adenosyl-L-homocysteine + H(+). It carries out the reaction L-arginyl-[protein] + 2 S-adenosyl-L-methionine = N(omega),N(omega)-dimethyl-L-arginyl-[protein] + 2 S-adenosyl-L-homocysteine + 2 H(+). Functionally, S-adenosyl-L-methionine-dependent and membrane-associated arginine methyltransferase that can both catalyze the formation of omega-N monomethylarginine (MMA) and asymmetrical dimethylarginine (aDMA) in proteins such as NIFK, myelin basic protein, histone H4, H2A and H2A/H2B dimer. Able to mono- and dimethylate EWS protein; however its precise role toward EWS remains unclear as it still interacts with fully methylated EWS. The protein is Protein arginine N-methyltransferase 8 of Homo sapiens (Human).